We begin with the raw amino-acid sequence, 163 residues long: Phosphopantetheine adenylyltransferase (163 aa).

Threonine 10 contributes to the substrate binding site. ATP contacts are provided by residues 10–11 (TF) and histidine 18. Substrate-binding residues include lysine 42, leucine 74, and arginine 88. Residues 89-91 (GLR), glutamate 99, and 124-130 (NSFISST) each bind ATP.

The protein belongs to the bacterial CoaD family. Homohexamer. Mg(2+) serves as cofactor.

The protein localises to the cytoplasm. The catalysed reaction is (R)-4'-phosphopantetheine + ATP + H(+) = 3'-dephospho-CoA + diphosphate. It functions in the pathway cofactor biosynthesis; coenzyme A biosynthesis; CoA from (R)-pantothenate: step 4/5. In terms of biological role, reversibly transfers an adenylyl group from ATP to 4'-phosphopantetheine, yielding dephospho-CoA (dPCoA) and pyrophosphate. The sequence is that of Phosphopantetheine adenylyltransferase from Shewanella oneidensis (strain ATCC 700550 / JCM 31522 / CIP 106686 / LMG 19005 / NCIMB 14063 / MR-1).